Consider the following 356-residue polypeptide: Carbohydrate sulfotransferase 10 (356 aa).

Residues 1–6 (MHHQWL) lie on the Cytoplasmic side of the membrane. A helical; Signal-anchor for type II membrane protein membrane pass occupies residues 7 to 27 (LLAACFWVIFMFMVASKFITL). Residues 28-356 (TFKDPDGYSA…GYQKPDFLLN (329 aa)) are Lumenal-facing. Asn-99 carries an N-linked (GlcNAc...) asparagine glycan. Residues 127-133 (PKVGNTQ) and 189-197 (RDPFERLIS) each bind 3'-phosphoadenylyl sulfate. Asn-228 and Asn-316 each carry an N-linked (GlcNAc...) asparagine glycan.

Belongs to the sulfotransferase 2 family.

It is found in the golgi apparatus membrane. It carries out the reaction 3-O-{beta-D-GlcA-(1-&gt;[3)-alpha-D-Xyl-(1-&gt;3)-beta-D-GlcA-(1-&gt;](n)-4)-beta-D-Xyl-(1-&gt;4)-Rib-ol-P-Rib-ol-P-3-beta-D-GalNAc-(1-&gt;3)-beta-D-GlcNAc-(1-&gt;4)-O-6-P-alpha-D-Man}-L-Thr-[protein] + 3'-phosphoadenylyl sulfate = 3-O-{O-3-S-beta-D-GlcA-(1-&gt;[3)-alpha-D-Xyl-(1-&gt;3)-beta-D-GlcA-(1-&gt;](n)-4)-beta-D-Xyl-(1-&gt;4)-Rib-ol-P-Rib-ol-P-3-beta-D-GalNAc-(1-&gt;3)-beta-D-GlcNAc-(1-&gt;4)-O-6-P-alpha-D-Man}-L-Thr-[protein] + adenosine 3',5'-bisphosphate + H(+). The catalysed reaction is 17beta-estradiol 3-O-(beta-D-glucuronate) + 3'-phosphoadenylyl sulfate = 17beta-estradiol 3-O-(3-sulfo-beta-D-glucuronate) + adenosine 3',5'-bisphosphate + H(+). The enzyme catalyses 17beta-estradiol 3-O-(beta-D-glucuronate) 17-sulfate + 3'-phosphoadenylyl sulfate = 17beta-estradiol 3-O-(3-sulfo-beta-D-glucuronate) 17-sulfate + adenosine 3',5'-bisphosphate + H(+). It catalyses the reaction 17beta-estradiol 17-O-(beta-D-glucuronate) + 3'-phosphoadenylyl sulfate = 17beta-estradiol 17-O-(3-sulfo-beta-D-glucuronate) + adenosine 3',5'-bisphosphate + H(+). It carries out the reaction 16alpha,17beta-estriol 3-O-(beta-D-glucuronate) + 3'-phosphoadenylyl sulfate = 16alpha,17beta-estriol 3-O-(3-sulfo-beta-D-glucuronate) + adenosine 3',5'-bisphosphate + H(+). The catalysed reaction is 16alpha,17beta-estriol 16-O-(beta-D-glucuronate) + 3'-phosphoadenylyl sulfate = 16alpha,17beta-estriol 16-O-(3-sulfo-beta-D-glucuronate) + adenosine 3',5'-bisphosphate + H(+). The enzyme catalyses 16alpha,17beta-estriol 17-O-(beta-D-glucuronate) + 3'-phosphoadenylyl sulfate = 16alpha,17beta-estriol 17-O-(3-sulfo-beta-D-glucuronate) + adenosine 3',5'-bisphosphate + H(+). It catalyses the reaction estrone 3-O-(beta-D-glucuronate) + 3'-phosphoadenylyl sulfate = estrone 3-O-(3-sulfo-beta-D-glucuronate) + adenosine 3',5'-bisphosphate + H(+). It carries out the reaction 3alpha,20alpha-dihydroxy-5beta-pregnane 3-O-(beta-D-glucuronate) + 3'-phosphoadenylyl sulfate = 3alpha,20alpha-dihydroxy-5beta-pregnane 3-O-(3-sulfo-beta-D-glucuronate) + adenosine 3',5'-bisphosphate + H(+). The catalysed reaction is testosterone 17-O-(beta-D-glucuronate) + 3'-phosphoadenylyl sulfate = testosterone 17-O-(3-sulfo-beta-D-glucuronate) + adenosine 3',5'-bisphosphate + H(+). The enzyme catalyses 3beta-androst-5-en-17-one 3-O-(beta-D-glucuronate) + 3'-phosphoadenylyl sulfate = 3beta-androst-5-en-17-one 3-O-(3-sulfo-beta-D-glucuronate) + adenosine 3',5'-bisphosphate + H(+). It catalyses the reaction 3alpha,17alpha-dihydroxy-5beta-androstane-11-one-17beta-carboxylate 3-O-(beta-D-glucuronate) + 3'-phosphoadenylyl sulfate = 3alpha,17alpha-dihydroxy-5beta-androstane-11-one-17beta-carboxylate 3-O-(3-sulfo-beta-D-glucuronate) + adenosine 3',5'-bisphosphate + H(+). It carries out the reaction 3alpha-hydroxyetiocholan-17-one 3-O-(beta-D-glucuronate) + 3'-phosphoadenylyl sulfate = 3alpha-hydroxyetiocholan-17-one 3-O-(3-sulfo-beta-D-glucuronate) + adenosine 3',5'-bisphosphate + H(+). It participates in steroid metabolism. Its pathway is protein modification; carbohydrate sulfation. Its function is as follows. Catalyzes the transfer of sulfate from 3'-phosphoadenylyl sulfate (PAPS) to position 3 of terminal glucuronic acid of both protein- and lipid-linked oligosaccharides. Participates in biosynthesis of HNK-1 carbohydrate structure 3-O-sulfo-beta-D-GlcA-(1-&gt;3)-beta-D-Gal-(1-&gt;4)-D-GlcNAc-R, a sulfated glucuronyl-lactosaminyl residue carried by many neural recognition molecules, which is involved in cell interactions during ontogenetic development and in synaptic plasticity in the adult. May be indirectly involved in synapse plasticity of the hippocampus, via its role in HNK-1 biosynthesis. Sulfates terminal glucuronyl residue of the laminin globular (LG)-domain binding epitope on DAG1/alpha-dystroglycan and prevents further polymerization by LARGE1 glycosyltransferase. Likely defines the chain length of LG epitope, conferring binding specificity to extracellular matrix components. Plays a role in down-regulating the steroid hormones. Sulfates glucuronidated estrogens and androgens with an impact in hormone cycle and fertility. Has a preference for glucuronyl moiety at the 3-hydroxyl group of a sterol ring rather than the 17-hydroxyl group, showing high catalytic efficiency for 17beta-estradiol 3-O-(beta-D-glucuronate) and dehydroepiandrosterone 3-O-(beta-D-glucuronate) hormones. In Mus musculus (Mouse), this protein is Carbohydrate sulfotransferase 10.